The following is a 312-amino-acid chain: Ribonuclease HIII (312 aa).

In terms of domain architecture, RNase H type-2 spans 95–312 (MSILGSDEVG…TEKAFRLLKK (218 aa)). Positions 101, 102, and 206 each coordinate a divalent metal cation.

This sequence belongs to the RNase HII family. RnhC subfamily. It depends on Mn(2+) as a cofactor. Requires Mg(2+) as cofactor.

The protein resides in the cytoplasm. The enzyme catalyses Endonucleolytic cleavage to 5'-phosphomonoester.. In terms of biological role, endonuclease that specifically degrades the RNA of RNA-DNA hybrids. The sequence is that of Ribonuclease HIII from Bacillus mycoides (strain KBAB4) (Bacillus weihenstephanensis).